Consider the following 881-residue polypeptide: Phosphoinositide 3-kinase regulatory subunit 5 (881 aa).

A heterodimerization region spans residues 23-99; that stretch reads SRDAVSSRWA…APHIPPDSEL (77 aa). Disordered regions lie at residues 312-339 and 472-499; these read PVASENEEDEEEEEEDVETDGCSPERDS and PQAKPRIPARSRRAHSLPQHGLGQKLQT. A compositionally biased stretch (acidic residues) spans 316 to 330; the sequence is ENEEDEEEEEEDVET. An interaction with G beta gamma proteins region spans residues 657 to 757; sequence PILADMILYY…WNDVEKVCTS (101 aa).

As to quaternary structure, heterodimer. Interacts with a catalytic subunit and with G beta gamma proteins.

It is found in the nucleus. It localises to the cytoplasm. The protein resides in the cell membrane. Greatly activated by G gamma proteins. Regulatory subunit of the PI3K gamma complex. This chain is Phosphoinositide 3-kinase regulatory subunit 5 (PIK3R5), found in Gallus gallus (Chicken).